We begin with the raw amino-acid sequence, 217 residues long: Probable transaldolase (217 aa).

Residue lysine 83 is the Schiff-base intermediate with substrate of the active site.

The protein belongs to the transaldolase family. Type 3B subfamily.

The protein localises to the cytoplasm. The enzyme catalyses D-sedoheptulose 7-phosphate + D-glyceraldehyde 3-phosphate = D-erythrose 4-phosphate + beta-D-fructose 6-phosphate. It participates in carbohydrate degradation; pentose phosphate pathway; D-glyceraldehyde 3-phosphate and beta-D-fructose 6-phosphate from D-ribose 5-phosphate and D-xylulose 5-phosphate (non-oxidative stage): step 2/3. Functionally, transaldolase is important for the balance of metabolites in the pentose-phosphate pathway. The polypeptide is Probable transaldolase (Roseobacter denitrificans (strain ATCC 33942 / OCh 114) (Erythrobacter sp. (strain OCh 114))).